Reading from the N-terminus, the 218-residue chain is UPF0502 protein Geob_1184 (218 aa).

This sequence belongs to the UPF0502 family.

The chain is UPF0502 protein Geob_1184 from Geotalea daltonii (strain DSM 22248 / JCM 15807 / FRC-32) (Geobacter daltonii).